The sequence spans 488 residues: MGADIGFIGLAVMGENLVLNIERNGFSVAVFNRTTTVVDRFLAGRAHGKRITGAHSIAELVSLLARPRKIMLMVKAGSAVDAVIDQILPLLEKGDLVIDGGNSHYQDTIRRMHALEAAGIHFIGTGVSGGEEGALRGPSLMPGGSAQAWPLVSPIFCAIAAKADDGTPCCDWVGSDGAGHYVKMIHNGIEYGDMQIIAEGYWFMKHALGMSYEHMHHTFTRWNTGRLHSYLIEITAAILAHQDTDGTPLLEKILDAAGQKGTGRWTCVAALEEGSPLTLITESVMARSLSAQKQARCKAHRVFGSPVKVSKAETLSAQQREELVSALEDALYCAKIVSYAQGFELLSHTAKRRGWTLDFSRIASLWRGGCIIRSGFLSKISAAFAQQHDLENLVLAPFFAEELKRACPGWRTIVAESVRQALPVPALSAALAWFDGFTGAALPANLLQAQRDYFGAHTYERTDAPRGEFFHTNWTGTGGDTIAGTYSI.

NADP(+) is bound by residues 9–14 (GLAVMG), 32–34 (NRT), 74–76 (VKA), and Asn102. Residues Asn102 and 128 to 130 (SGG) each bind substrate. Lys183 serves as the catalytic Proton acceptor. 186–187 (HN) serves as a coordination point for substrate. Residue Glu190 is the Proton donor of the active site. Substrate contacts are provided by Tyr191, Lys260, Arg287, Arg451, and His457.

This sequence belongs to the 6-phosphogluconate dehydrogenase family. Homodimer.

It catalyses the reaction 6-phospho-D-gluconate + NADP(+) = D-ribulose 5-phosphate + CO2 + NADPH. Its pathway is carbohydrate degradation; pentose phosphate pathway; D-ribulose 5-phosphate from D-glucose 6-phosphate (oxidative stage): step 3/3. Its function is as follows. Catalyzes the oxidative decarboxylation of 6-phosphogluconate to ribulose 5-phosphate and CO(2), with concomitant reduction of NADP to NADPH. The sequence is that of 6-phosphogluconate dehydrogenase, decarboxylating (gnd) from Treponema pallidum (strain Nichols).